The primary structure comprises 520 residues: Legumin A2 (520 aa).

An N-terminal signal peptide occupies residues 1-22 (MATKLLALSLSFCFLLLGGCFA). 2 disulfides stabilise this stretch: cysteine 32–cysteine 65 and cysteine 108–cysteine 342. The region spanning 37–233 (LNALEPDNRI…AFNVNRHIVD (197 aa)) is the Cupin type-1 1 domain. The segment at 250 to 339 (VKGGLSIISP…RRQGDNGLEE (90 aa)) is disordered. The 150-residue stretch at 348-497 (LNIGPSSSPD…TFNLQRNEAR (150 aa)) folds into the Cupin type-1 2 domain.

Belongs to the 11S seed storage protein (globulins) family. Hexamer; each subunit is composed of an acidic and a basic chain derived from a single precursor and linked by a disulfide bond.

In terms of biological role, this protein found in the seeds of many leguminous and non-leguminous plants is the source of sulfur-containing amino acids in seed meals. The chain is Legumin A2 (LEGA2) from Pisum sativum (Garden pea).